We begin with the raw amino-acid sequence, 799 residues long: Elongation factor G, mitochondrial (799 aa).

The N-terminal 34 residues, 1–34 (MRCPSLTRLPYRAVSGLPRSVVRLQSQNFLTRRC), are a transit peptide targeting the mitochondrion. In terms of domain architecture, tr-type G spans 97 to 384 (SRVRNIGIAA…GVVDYLPNPA (288 aa)). GTP-binding positions include 106 to 113 (AHIDSGKT), 182 to 186 (DTPGH), and 236 to 239 (NKMD).

It belongs to the TRAFAC class translation factor GTPase superfamily. Classic translation factor GTPase family. EF-G/EF-2 subfamily.

The protein resides in the mitochondrion. The protein operates within protein biosynthesis; polypeptide chain elongation. Mitochondrial GTPase that catalyzes the GTP-dependent ribosomal translocation step during translation elongation. During this step, the ribosome changes from the pre-translocational (PRE) to the post-translocational (POST) state as the newly formed A-site-bound peptidyl-tRNA and P-site-bound deacylated tRNA move to the P and E sites, respectively. Catalyzes the coordinated movement of the two tRNA molecules, the mRNA and conformational changes in the ribosome. This chain is Elongation factor G, mitochondrial (mef1), found in Aspergillus flavus (strain ATCC 200026 / FGSC A1120 / IAM 13836 / NRRL 3357 / JCM 12722 / SRRC 167).